A 156-amino-acid polypeptide reads, in one-letter code: Translation initiation factor IF-1, chloroplastic (156 aa).

Residues 1-81 (MASLSWWNPA…RRTTSIQCLS (81 aa)) constitute a chloroplast transit peptide. A disordered region spans residues 51 to 79 (KSLLVKTQQQSKKKKNNSTNSRRTTSIQC). The segment covering 67–76 (NSTNSRRTTS) has biased composition (low complexity). The region spanning 82 to 151 (QEQKWTHEGS…SKGRIIYRLR (70 aa)) is the S1-like domain.

The protein belongs to the IF-1 family. Component of the 30S ribosomal translation pre-initiation complex which assembles on the 30S ribosome in the order IF-2 and IF-3, IF-1 and N-formylmethionyl-tRNA(fMet); mRNA recruitment can occur at any time during PIC assembly.

The protein resides in the plastid. The protein localises to the chloroplast. One of the essential components for the initiation of protein synthesis. Stabilizes the binding of IF-2 and IF-3 on the 30S subunit to which N-formylmethionyl-tRNA(fMet) subsequently binds. Helps modulate mRNA selection, yielding the 30S pre-initiation complex (PIC). Upon addition of the 50S ribosomal subunit IF-1, IF-2 and IF-3 are released leaving the mature 70S translation initiation complex. This Solanum lycopersicum (Tomato) protein is Translation initiation factor IF-1, chloroplastic (infA).